A 638-amino-acid chain; its full sequence is DNA repair protein rhp41 (638 aa).

Belongs to the XPC family.

Its subcellular location is the nucleus. Its function is as follows. Has a role in the nucleotide excision repair (NER) pathway. Acts in both transcription-coupled repair (TCR) which removes damage from the transcribed strand of active genes and in global genome repair (GGR) which removes damage in untranscribed DNA. Involved in the repair of UV-induced damages where it is involved in the removal of cyclobutane pyrimidine dimers (CPDs). This is DNA repair protein rhp41 (rhp41) from Schizosaccharomyces pombe (strain 972 / ATCC 24843) (Fission yeast).